We begin with the raw amino-acid sequence, 93 residues long: MDGIKYAVFTDKSIRLLGKNQYTFNVESGSTRTEIKHWVELFFGVKVKAMNSHRLPGKGRRMGPILGHTMHYRRMIITLQPGYSIPPLRKKRT.

It belongs to the universal ribosomal protein uL23 family. In terms of assembly, part of the 50S ribosomal subunit.

It is found in the plastid. The protein localises to the chloroplast. Binds to 23S rRNA. In Eucalyptus globulus subsp. globulus (Tasmanian blue gum), this protein is Large ribosomal subunit protein uL23cz/uL23cy (rpl23-A).